The chain runs to 570 residues: GDP-Man:Man(3)GlcNAc(2)-PP-Dol alpha-1,2-mannosyltransferase (570 aa).

Over 1 to 7 the chain is Lumenal; it reads MKLADFV. Residues 8-70 traverse the membrane as a helical segment; sequence TYVFGSLLAG…DFGWKNSSVR (63 aa). The Cytoplasmic segment spans residues 71-200; that stretch reads RAFILASERP…RLVESKSWPK (130 aa). An intramembrane region (helical) is located at residues 201–221; that stretch reads FTLLGQAYGSIILSIEALTTL. Residues 222-446 are Cytoplasmic-facing; sequence APDYWIDTMG…FGINAMWNEH (225 aa). Positions 447-467 form an intramembrane region, helical; the sequence is FGIAVVEYMASGLIPLCHASA. Topologically, residues 468-570 are cytoplasmic; the sequence is GPLYDIVVPW…LNLTHNRMFS (103 aa).

This sequence belongs to the glycosyltransferase group 1 family.

The protein localises to the endoplasmic reticulum membrane. It carries out the reaction an alpha-D-Man-(1-&gt;3)-[alpha-D-Man-(1-&gt;6)]-beta-D-Man-(1-&gt;4)-beta-D-GlcNAc-(1-&gt;4)-alpha-D-GlcNAc-diphospho-di-trans,poly-cis-dolichol + 2 GDP-alpha-D-mannose = an alpha-D-Man-(1-&gt;2)-alpha-D-Man-(1-&gt;2)-alpha-D-Man-(1-&gt;3)-[alpha-D-Man-(1-&gt;6)]-beta-D-Man-(1-&gt;4)-beta-D-GlcNAc-(1-&gt;4)-alpha-D-GlcNAc-diphospho-di-trans,poly-cis-dolichol + 2 GDP + 2 H(+). The protein operates within protein modification; protein glycosylation. In terms of biological role, GDP-Man:Man(3)GlcNAc(2)-PP-Dol alpha-1,2-mannosyltransferase that operates in the biosynthetic pathway of dolichol-linked oligosaccharides, the glycan precursors employed in protein asparagine (N)-glycosylation. The assembly of dolichol-linked oligosaccharides begins on the cytosolic side of the endoplasmic reticulum membrane and finishes in its lumen. The sequential addition of sugars to dolichol pyrophosphate produces dolichol-linked oligosaccharides containing fourteen sugars, including two GlcNAcs, nine mannoses and three glucoses. Once assembled, the oligosaccharide is transferred from the lipid to nascent proteins by oligosaccharyltransferases. Catalyzes, on the cytoplasmic face of the endoplasmic reticulum, the addition of the fourth and fifth mannose residues to the dolichol-linked oligosaccharide chain, to produce Man(5)GlcNAc(2)-PP-dolichol core oligosaccharide. This chain is GDP-Man:Man(3)GlcNAc(2)-PP-Dol alpha-1,2-mannosyltransferase (ALG11), found in Kluyveromyces lactis (strain ATCC 8585 / CBS 2359 / DSM 70799 / NBRC 1267 / NRRL Y-1140 / WM37) (Yeast).